The sequence spans 378 residues: Ferredoxin--NADP reductase, root isozyme 1, chloroplastic (378 aa).

The N-terminal 65 residues, 1–65 (MALSTTPSQM…KRSTICMSLQ (65 aa)), are a transit peptide targeting the chloroplast. The 129-residue stretch at 93 to 221 (KEPYTATIVS…TGPSGKVMLL (129 aa)) folds into the FAD-binding FR-type domain. Residues Cys196 and Cys201 are joined by a disulfide bond. Ser197 is subject to Phosphoserine. Thr229 carries the phosphothreonine modification. 231 to 249 (IMIATGTGVAPYRGYLRRM) serves as a coordination point for NADP(+). Residues 349 to 373 (LKRVAEERGESWEQKLTQLRKNKQW) are a coiled coil.

Belongs to the ferredoxin--NADP reductase type 1 family. The cofactor is FAD. Expressed in shoots and roots. Less abundant in roots than RFNR2.

Its subcellular location is the plastid. The protein localises to the chloroplast. The catalysed reaction is 2 reduced [2Fe-2S]-[ferredoxin] + NADP(+) + H(+) = 2 oxidized [2Fe-2S]-[ferredoxin] + NADPH. Its function is as follows. Maintains the supply of reduced ferredoxin under non-photosynthetic conditions. The protein is Ferredoxin--NADP reductase, root isozyme 1, chloroplastic (RFNR1) of Arabidopsis thaliana (Mouse-ear cress).